Reading from the N-terminus, the 137-residue chain is MEQTLSIIKPDAVAKNVVGKILDRFESAGLKIAATKKLQLSQADAEAFYAVHAARPFFKDLVEFMISGPVVVSVLEGENAMAKNRELMGATNPKEAAAGTIRADFADSIDANAVHGSDSLENAKNEIAFFFAQREIC.

ATP-binding residues include Lys9, Phe57, Arg85, Thr91, Arg102, and Asn112. The Pros-phosphohistidine intermediate role is filled by His115.

The protein belongs to the NDK family. As to quaternary structure, homotetramer. The cofactor is Mg(2+).

It localises to the cytoplasm. It carries out the reaction a 2'-deoxyribonucleoside 5'-diphosphate + ATP = a 2'-deoxyribonucleoside 5'-triphosphate + ADP. The enzyme catalyses a ribonucleoside 5'-diphosphate + ATP = a ribonucleoside 5'-triphosphate + ADP. Its function is as follows. Major role in the synthesis of nucleoside triphosphates other than ATP. The ATP gamma phosphate is transferred to the NDP beta phosphate via a ping-pong mechanism, using a phosphorylated active-site intermediate. This Aliarcobacter butzleri (strain RM4018) (Arcobacter butzleri) protein is Nucleoside diphosphate kinase.